A 190-amino-acid polypeptide reads, in one-letter code: UPF0200 protein TSIB_0920 (190 aa).

An ATP-binding site is contributed by 7-14; sequence GMPGSGKG.

Belongs to the UPF0200 family.

In Thermococcus sibiricus (strain DSM 12597 / MM 739), this protein is UPF0200 protein TSIB_0920.